The chain runs to 1034 residues: Phosphoenolpyruvate carboxylase (1034 aa).

Active-site residues include H203 and K680.

Belongs to the PEPCase type 1 family. Requires Mg(2+) as cofactor.

The catalysed reaction is oxaloacetate + phosphate = phosphoenolpyruvate + hydrogencarbonate. Functionally, forms oxaloacetate, a four-carbon dicarboxylic acid source for the tricarboxylic acid cycle. The polypeptide is Phosphoenolpyruvate carboxylase (ppc) (Synechocystis sp. (strain ATCC 27184 / PCC 6803 / Kazusa)).